The following is a 230-amino-acid chain: Secretory carrier-associated membrane protein 4 (230 aa).

Over 1–39 (MAGKENNFPPLPHFLPLKPCFYQDFSDEIPVEHQVLVKR) the chain is Cytoplasmic. Transmembrane regions (helical) follow at residues 40–60 (IYRLWMFYCTTLGVNLVACLA), 61–81 (WWIAGGAGANFGLAMLWLVLF), 106–126 (MAFFFIFGAQFVLTVIQAIGF), and 149–169 (VVMLIPAIMFSLSAVVMAITI). Residues 170-230 (VKVHRIYRGA…SYSTSGSQWP (61 aa)) lie on the Cytoplasmic side of the membrane. The residue at position 194 (Thr194) is a Phosphothreonine. The interval 197–230 (NPPSREAQFNSFSGNSLPEYPTVPSYSTSGSQWP) is disordered. Composition is skewed to polar residues over residues 203–212 (AQFNSFSGNS) and 220–230 (PSYSTSGSQWP).

This sequence belongs to the SCAMP family.

Its subcellular location is the membrane. Its function is as follows. Probably involved in membrane protein trafficking. This is Secretory carrier-associated membrane protein 4 (Scamp4) from Rattus norvegicus (Rat).